Consider the following 447-residue polypeptide: MNKNTWVIGFTLFAMFFGAGNLIFPPNLGLDSGQFFWPAILAFVLTGIDLPLLGVIVGALDKEGYIGALNKISPKFSILFLIIIYLTIGPLFAIPRTASTSFEMTITPIIHSNSSIALFIFTIIYFIVVLYICLNPSKLIDRIGSLLTPLLLITILAMIIKGYLDFSGNTAGKGNEALYHSNFSSFAEGFTQGYLTMDAIAAIAFSMIVVNAVKLTGITKTNQIFKQTLTAGLIAAVALIFIYISLGYIGNHMPVSDMTLDQLKSKDRNIGTYLLTTMASTGFGSFGKYLLGIIVALACLTTACGLIGAVSEYFHRIVPKVSYKAFVLVFILMSFIIANQGLNAVISMSIPVLSIVYPVAITVVLLILIAKFIPTKRISQQIPVIIVFILSIFSVISKLGWLKINFIESLPLRAYSLEWFPVAIIATILGYLVGIFVKQDPIKYQQE.

12 consecutive transmembrane segments (helical) span residues 6–26, 40–60, 74–94, 114–134, 143–163, 193–213, 229–249, 290–310, 326–346, 350–370, 382–402, and 417–437; these read WVIG…IFPP, ILAF…VGAL, PKFS…LFAI, SSIA…YICL, IGSL…IKGY, GYLT…VNAV, LTAG…LGYI, LLGI…IGAV, FVLV…NAVI, IPVL…ILIA, IPVI…LGWL, and LEWF…GIFV.

The protein belongs to the branched chain amino acid transporter family.

The protein localises to the cell membrane. Component of the transport system for branched-chain amino acids (leucine, isoleucine and valine), which is coupled to a proton motive force (Potential). Contributes to NaCl tolerance. The polypeptide is Putative branched-chain amino acid carrier protein SAB1263c (Staphylococcus aureus (strain bovine RF122 / ET3-1)).